The primary structure comprises 530 residues: ATP synthase subunit alpha 3 (530 aa).

174 to 181 is an ATP binding site; it reads GDRATGKT. Low complexity predominate over residues 507–522; it reads TASATAPPDPPAASAA. The disordered stretch occupies residues 507–530; the sequence is TASATAPPDPPAASAAELPQPDSP.

The protein belongs to the ATPase alpha/beta chains family. In terms of assembly, F-type ATPases have 2 components, CF(1) - the catalytic core - and CF(0) - the membrane proton channel. CF(1) has five subunits: alpha(3), beta(3), gamma(1), delta(1), epsilon(1). CF(0) has three main subunits: a(1), b(2) and c(9-12). The alpha and beta chains form an alternating ring which encloses part of the gamma chain. CF(1) is attached to CF(0) by a central stalk formed by the gamma and epsilon chains, while a peripheral stalk is formed by the delta and b chains.

It is found in the cell inner membrane. The catalysed reaction is ATP + H2O + 4 H(+)(in) = ADP + phosphate + 5 H(+)(out). Its function is as follows. Produces ATP from ADP in the presence of a proton gradient across the membrane. The alpha chain is a regulatory subunit. The sequence is that of ATP synthase subunit alpha 3 from Paraburkholderia xenovorans (strain LB400).